The sequence spans 307 residues: Pantothenate kinase (307 aa).

An ATP-binding site is contributed by 87 to 94; sequence GSVAVGKS.

This sequence belongs to the prokaryotic pantothenate kinase family.

The protein resides in the cytoplasm. It catalyses the reaction (R)-pantothenate + ATP = (R)-4'-phosphopantothenate + ADP + H(+). Its pathway is cofactor biosynthesis; coenzyme A biosynthesis; CoA from (R)-pantothenate: step 1/5. The sequence is that of Pantothenate kinase from Vibrio vulnificus (strain CMCP6).